Here is a 602-residue protein sequence, read N- to C-terminus: UvrABC system protein C (602 aa).

Positions 17-94 (TTSGCYKMYS…IKEHKPDYNI (78 aa)) constitute a GIY-YIG domain. In terms of domain architecture, UVR spans 199–234 (SKLLDEIEIKMKEVIKREDFESAIKLKETKRSLIEI).

This sequence belongs to the UvrC family. Interacts with UvrB in an incision complex.

It is found in the cytoplasm. Functionally, the UvrABC repair system catalyzes the recognition and processing of DNA lesions. UvrC both incises the 5' and 3' sides of the lesion. The N-terminal half is responsible for the 3' incision and the C-terminal half is responsible for the 5' incision. The sequence is that of UvrABC system protein C from Borrelia turicatae (strain 91E135).